The following is a 301-amino-acid chain: Prestalk A differentiation protein A (301 aa).

The protein belongs to the NmrA-type oxidoreductase family.

Its function is as follows. Involved in development and cell differentiation. The protein is Prestalk A differentiation protein A (padA) of Dictyostelium discoideum (Social amoeba).